The following is a 44-amino-acid chain: Somatoliberin (44 aa).

A Leucine amide modification is found at leucine 44.

Belongs to the glucagon family.

The protein localises to the secreted. In terms of biological role, GRF is released by the hypothalamus and acts on the adenohypophyse to stimulate the secretion of growth hormone. The chain is Somatoliberin (GHRH) from Sus scrofa (Pig).